The chain runs to 485 residues: Polyol:NADP oxidoreductase (485 aa).

Belongs to the mannitol dehydrogenase family.

It is found in the cytoplasm. This is Polyol:NADP oxidoreductase (por) from Gluconobacter oxydans (strain 621H) (Gluconobacter suboxydans).